The primary structure comprises 54 residues: Rubredoxin (54 aa).

In terms of domain architecture, Rubredoxin-like spans 1-54 (MKKYQCIVCGWIYDEAEGWPQDGIAPGTKWEDIPDDWTCPDCGVSKVDFEMIEV). The Fe cation site is built by Cys6, Cys9, Cys39, and Cys42.

This sequence belongs to the rubredoxin family. Requires Fe(3+) as cofactor.

Its subcellular location is the cytoplasm. Its pathway is hydrocarbon metabolism; alkane degradation. Its function is as follows. Involved in the hydrocarbon hydroxylating system, which transfers electrons from NADH to rubredoxin reductase and then through rubredoxin to alkane 1 monooxygenase. The protein is Rubredoxin (rubA) of Acinetobacter baylyi (strain ATCC 33305 / BD413 / ADP1).